Consider the following 286-residue polypeptide: Type II restriction enzyme NgoMIV (286 aa).

Positions 140 and 186 each coordinate Mg(2+).

In terms of assembly, homotetramer. It depends on Mg(2+) as a cofactor.

The enzyme catalyses Endonucleolytic cleavage of DNA to give specific double-stranded fragments with terminal 5'-phosphates.. A P subtype restriction enzyme that recognizes the double-stranded sequence 5'-GCCGGC-3' and cleaves after G-1. This Neisseria gonorrhoeae protein is Type II restriction enzyme NgoMIV (ngoMIVR).